The sequence spans 432 residues: Mannose-6-phosphate isomerase 1 (432 aa).

Position 1 is an N-acetylmethionine (Met1). The Zn(2+) site is built by Gln124, His126, Glu151, and His288. Arg307 is a catalytic residue.

It belongs to the mannose-6-phosphate isomerase type 1 family. The cofactor is Zn(2+). In terms of tissue distribution, constitutively expressed in both vegetative and reproductive organs under normal growth conditions (at protein level).

It catalyses the reaction D-mannose 6-phosphate = D-fructose 6-phosphate. The protein operates within nucleotide-sugar biosynthesis; GDP-alpha-D-mannose biosynthesis; alpha-D-mannose 1-phosphate from D-fructose 6-phosphate: step 1/2. Its activity is regulated as follows. Inhibited by EDTA, Zn(2+), Cd(2+), Co(2+), p-chloromercuribenzoate and L-ascorbic acid (AsA). In terms of biological role, phosphomannose isomerase involved in the synthesis of the GDP-mannose and dolichol-phosphate-mannose required for a number of critical mannosyl transfer reactions. Involved in the ascorbic acid (AsA) biosynthesis. Required during the endosperm development. The chain is Mannose-6-phosphate isomerase 1 (PMI1) from Arabidopsis thaliana (Mouse-ear cress).